Reading from the N-terminus, the 262-residue chain is Translation initiation factor 2 subunit alpha (262 aa).

An S1 motif domain is found at 15 to 86 (GELVVGTVHK…RKGHVDVSMK (72 aa)).

This sequence belongs to the eIF-2-alpha family. In terms of assembly, heterotrimer composed of an alpha, a beta and a gamma chain.

Its function is as follows. eIF-2 functions in the early steps of protein synthesis by forming a ternary complex with GTP and initiator tRNA. The chain is Translation initiation factor 2 subunit alpha (eif2a) from Methanothermobacter thermautotrophicus (strain ATCC 29096 / DSM 1053 / JCM 10044 / NBRC 100330 / Delta H) (Methanobacterium thermoautotrophicum).